Reading from the N-terminus, the 292-residue chain is Cyclin-dependent kinase 5 (292 aa).

The region spanning 4–286 (YEKLEKIGEG…AEEALQHPYF (283 aa)) is the Protein kinase domain. ATP-binding positions include 10 to 18 (IGEGTYGTV) and lysine 33. Tyrosine 15 bears the Phosphotyrosine; by ABL1, EPHA4 and FYN mark. Threonine 17 is modified (phosphothreonine). Lysine 56 is subject to N6-acetyllysine. The residue at position 72 (serine 72) is a Phosphoserine. Aspartate 126 (proton acceptor) is an active-site residue. Serine 159 carries the post-translational modification Phosphoserine.

It belongs to the protein kinase superfamily. CMGC Ser/Thr protein kinase family. CDC2/CDKX subfamily. Heterodimer composed of a catalytic subunit CDK5 and a regulatory subunit CDK5R1 (p25) and macromolecular complex composed of at least CDK5, CDK5R1 (p35) and CDK5RAP1 or CDK5RAP2 or CDK5RAP3. Only the heterodimer shows kinase activity. Under neurotoxic stress and neuronal injury conditions, p35 is cleaved by calpain to generate p25 that hyperactivates CDK5, that becomes functionally disabled and often toxic. Found in a trimolecular complex with CABLES1 and ABL1. Interacts with CABLES1 and CABLES2. Interacts with AATK and GSTP1. Binds to HDAC1 when in complex with p25. Interaction with myristoylation p35 promotes CDK5 association with membranes. Both isoforms 1 and 2 interacts with beta-catenin/CTNNB1. Interacts with delta-catenin/CTNND2 and APEX1. Interacts with P53/TP53 in neurons. Interacts with EPHA4; may mediate the activation of NGEF by EPHA4. Interacts with PTK2/FAK1. The complex p35/CDK5 interacts with CLOCK. Post-translationally, phosphorylation on Tyr-15 by ABL1 and FYN, and on Ser-159 by casein kinase 1 promotes kinase activity. By contrast, phosphorylation at Thr-14 inhibits activity. Phosphorylation at Ser-159 is essential for maximal catalytic activity.

It is found in the nucleus. It localises to the cytoplasm. The protein resides in the cell membrane. Its subcellular location is the perikaryon. The protein localises to the cell projection. It is found in the lamellipodium. It localises to the growth cone. The protein resides in the postsynaptic density. Its subcellular location is the synapse. It catalyses the reaction L-seryl-[protein] + ATP = O-phospho-L-seryl-[protein] + ADP + H(+). The enzyme catalyses L-threonyl-[protein] + ATP = O-phospho-L-threonyl-[protein] + ADP + H(+). Inhibited by 2-(1-ethyl-2-hydroxyethylamino)-6-benzylamino-9-isopropylpurine (roscovitine), 1-isopropyl-4-aminobenzyl-6-ether-linked benzimidazoles, resveratrol, AT-7519 and olomoucine. Activated by CDK5R1 (p35) and CDK5R2 (p39) during the development of the nervous system; degradation of CDK5R1 (p35) and CDK5R2 (p39) by proteasome result in down regulation of kinase activity, during this process, CDK5 phosphorylates p35 and induces its ubiquitination and subsequent degradation. Kinase activity is mainly determined by the amount of p35 available and subcellular location; reversible association to plasma membrane inhibits activity. Long-term inactivation as well as CDK5R1 (p25)-mediated hyperactivation of CDK5 triggers cell death. The pro-death activity of hyperactivated CDK5 is suppressed by membrane association of CDK5, via myristoylation of p35. Brain-derived neurotrophic factor, glial-derived neurotrophic factor, nerve growth factor (NGF), retinoic acid, laminin and neuregulin promote activity. Neurotoxicity enhances nuclear activity, thus leading to MEF2 phosphorylation and inhibition prior to apoptosis of cortical neurons. Repression by GSTP1 via p25/p35 translocation prevents neurodegeneration. In terms of biological role, proline-directed serine/threonine-protein kinase essential for neuronal cell cycle arrest and differentiation and may be involved in apoptotic cell death in neuronal diseases by triggering abortive cell cycle re-entry. Interacts with D1 and D3-type G1 cyclins. Phosphorylates SRC, NOS3, VIM/vimentin, p35/CDK5R1, MEF2A, SIPA1L1, SH3GLB1, PXN, PAK1, MCAM/MUC18, SEPT5, SYN1, DNM1, AMPH, SYNJ1, CDK16, RAC1, RHOA, CDC42, TONEBP/NFAT5, MAPT/TAU, MAP1B, histone H1, p53/TP53, HDAC1, APEX1, PTK2/FAK1, huntingtin/HTT, ATM, MAP2, NEFH and NEFM. Regulates several neuronal development and physiological processes including neuronal survival, migration and differentiation, axonal and neurite growth, synaptogenesis, oligodendrocyte differentiation, synaptic plasticity and neurotransmission, by phosphorylating key proteins. Negatively regulates the CACNA1B/CAV2.2 -mediated Ca(2+) release probability at hippocampal neuronal soma and synaptic terminals. Activated by interaction with CDK5R1 (p35) and CDK5R2 (p39), especially in postmitotic neurons, and promotes CDK5R1 (p35) expression in an autostimulation loop. Phosphorylates many downstream substrates such as Rho and Ras family small GTPases (e.g. PAK1, RAC1, RHOA, CDC42) or microtubule-binding proteins (e.g. MAPT/TAU, MAP2, MAP1B), and modulates actin dynamics to regulate neurite growth and/or spine morphogenesis. Also phosphorylates exocytosis associated proteins such as MCAM/MUC18, SEPT5, SYN1, and CDK16/PCTAIRE1 as well as endocytosis associated proteins such as DNM1, AMPH and SYNJ1 at synaptic terminals. In the mature central nervous system (CNS), regulates neurotransmitter movements by phosphorylating substrates associated with neurotransmitter release and synapse plasticity; synaptic vesicle exocytosis, vesicles fusion with the presynaptic membrane, and endocytosis. Promotes cell survival by activating anti-apoptotic proteins BCL2 and STAT3, and negatively regulating of JNK3/MAPK10 activity. Phosphorylation of p53/TP53 in response to genotoxic and oxidative stresses enhances its stabilization by preventing ubiquitin ligase-mediated proteasomal degradation, and induces transactivation of p53/TP53 target genes, thus regulating apoptosis. Phosphorylation of p35/CDK5R1 enhances its stabilization by preventing calpain-mediated proteolysis producing p25/CDK5R1 and avoiding ubiquitin ligase-mediated proteasomal degradation. During aberrant cell-cycle activity and DNA damage, p25/CDK5 activity elicits cell-cycle activity and double-strand DNA breaks that precedes neuronal death by deregulating HDAC1. DNA damage triggered phosphorylation of huntingtin/HTT in nuclei of neurons protects neurons against polyglutamine expansion as well as DNA damage mediated toxicity. Phosphorylation of PXN reduces its interaction with PTK2/FAK1 in matrix-cell focal adhesions (MCFA) during oligodendrocytes (OLs) differentiation. Negative regulator of Wnt/beta-catenin signaling pathway. Activator of the GAIT (IFN-gamma-activated inhibitor of translation) pathway, which suppresses expression of a post-transcriptional regulon of proinflammatory genes in myeloid cells; phosphorylates the linker domain of glutamyl-prolyl tRNA synthetase (EPRS) in a IFN-gamma-dependent manner, the initial event in assembly of the GAIT complex. Phosphorylation of SH3GLB1 is required for autophagy induction in starved neurons. Phosphorylation of TONEBP/NFAT5 in response to osmotic stress mediates its rapid nuclear localization. MEF2 is inactivated by phosphorylation in nucleus in response to neurotoxin, thus leading to neuronal apoptosis. APEX1 AP-endodeoxyribonuclease is repressed by phosphorylation, resulting in accumulation of DNA damage and contributing to neuronal death. NOS3 phosphorylation down regulates NOS3-derived nitrite (NO) levels. SRC phosphorylation mediates its ubiquitin-dependent degradation and thus leads to cytoskeletal reorganization. May regulate endothelial cell migration and angiogenesis via the modulation of lamellipodia formation. Involved in dendritic spine morphogenesis by mediating the EFNA1-EPHA4 signaling. The complex p35/CDK5 participates in the regulation of the circadian clock by modulating the function of CLOCK protein: phosphorylates CLOCK at 'Thr-451' and 'Thr-461' and regulates the transcriptional activity of the CLOCK-BMAL1 heterodimer in association with altered stability and subcellular distribution. The sequence is that of Cyclin-dependent kinase 5 from Bos taurus (Bovine).